Consider the following 162-residue polypeptide: MEAIKDFFGSLLLTELFKGMRLTGKYFFKRKMTLRYPTEKTPASPRFRGLHALRRYPNGEERCIACKLCEAVCPALAITIESDQREDGTRRTTRYDIDLTKCIFCGFCEESCPVDSIVETHIHEYHGEKRGDLYFTKDMLLAVGDRYEADIAQRRAEDAPYR.

2 4Fe-4S ferredoxin-type domains span residues 53–83 (LRRY…IESD) and 93–122 (TRYD…ETHI). The [4Fe-4S] cluster site is built by cysteine 63, cysteine 66, cysteine 69, cysteine 73, cysteine 102, cysteine 105, cysteine 108, and cysteine 112.

It belongs to the complex I 23 kDa subunit family. NDH-1 is composed of 14 different subunits. Subunits NuoA, H, J, K, L, M, N constitute the membrane sector of the complex. [4Fe-4S] cluster is required as a cofactor.

It localises to the cell inner membrane. The enzyme catalyses a quinone + NADH + 5 H(+)(in) = a quinol + NAD(+) + 4 H(+)(out). Its function is as follows. NDH-1 shuttles electrons from NADH, via FMN and iron-sulfur (Fe-S) centers, to quinones in the respiratory chain. The immediate electron acceptor for the enzyme in this species is believed to be ubiquinone. Couples the redox reaction to proton translocation (for every two electrons transferred, four hydrogen ions are translocated across the cytoplasmic membrane), and thus conserves the redox energy in a proton gradient. In Bordetella avium (strain 197N), this protein is NADH-quinone oxidoreductase subunit I.